We begin with the raw amino-acid sequence, 509 residues long: MKEYRVYLERARSRQQDFLYPLIFREYIYGLAYSHIDRSIFVENGGYDNKYSLLNVKRLITQMYQQNHLIISTNDSNKNPFLGYNKNFYSQIIAEGFAIVVEIPFFLQLSSSLEEAEIIKSYKNVRSIHSIFPFLEDKFTYLNYVSDIRIPYPIHLEILVQILRYWVKDAPFFHLLRLFLYDFCNWNCFIPTKKSISTFSKSNPRLFLFLYNFYVCEYESIFLFLRNKSSHLRLKSFSVFNERIFFYAKREHLVEVFSKDFSYTLPFFKDPNIHYVRYQGKCILASKNGPFLMNKWKHYFIHLWQCFFDVWSQPRTININQLSEHSIQLLGYFSNVRLNRSVVRSQMLQNTFLIEIVSKKLDIIVPIIPIIRSLAKAKFCNVLGHPISKPVWADSSDFDIIERFLRICSNLCHYYHGSSKKKSLYRIKYILRLSCIKTLACKHKSTVRAFLQTSGSEELLEEFFTEEEEILPWNFQILSLICHSKSFTSHGFHSNRIWYLDILFSNDLE.

This sequence belongs to the intron maturase 2 family. MatK subfamily.

It localises to the plastid. The protein localises to the chloroplast. Usually encoded in the trnK tRNA gene intron. Probably assists in splicing its own and other chloroplast group II introns. This is Maturase K from Trifolium semipilosum (Kenya clover).